The sequence spans 238 residues: Ribonuclease PH (238 aa).

Residues Arg86 and Gly124–Arg126 each bind phosphate.

The protein belongs to the RNase PH family. Homohexameric ring arranged as a trimer of dimers.

The enzyme catalyses tRNA(n+1) + phosphate = tRNA(n) + a ribonucleoside 5'-diphosphate. Functionally, phosphorolytic 3'-5' exoribonuclease that plays an important role in tRNA 3'-end maturation. Removes nucleotide residues following the 3'-CCA terminus of tRNAs; can also add nucleotides to the ends of RNA molecules by using nucleoside diphosphates as substrates, but this may not be physiologically important. Probably plays a role in initiation of 16S rRNA degradation (leading to ribosome degradation) during starvation. The sequence is that of Ribonuclease PH from Geobacter metallireducens (strain ATCC 53774 / DSM 7210 / GS-15).